A 210-amino-acid polypeptide reads, in one-letter code: High mobility group protein B2 (210 aa).

K3 carries the post-translational modification N6-acetyllysine. Residues 9–79 (PRGKMSSYAF…RYDREMKNYV (71 aa)) constitute a DNA-binding region (HMG box 1). C23 is subject to Cysteine sulfonic acid (-SO3H); alternate. C23 and C45 are joined by a disulfide. An N6-acetyllysine modification is found at K30. Position 35 is a phosphoserine (S35). An N6-acetyllysine modification is found at K43. C45 bears the Cysteine sulfonic acid (-SO3H); alternate mark. The disordered stretch occupies residues 71-102 (YDREMKNYVPPKGDKKGKKKDPNAPKRPPSAF). K90 is modified (N6-acetyllysine). A DNA-binding region (HMG box 2) is located at residues 95–163 (PKRPPSAFFL…KYEKDIAAYR (69 aa)). S100 carries the phosphoserine modification. Position 106 is a cysteine sulfonic acid (-SO3H) (C106). K114 and K141 each carry N6-acetyllysine. Over residues 162–172 (YRAKGKSEAGK) the composition is skewed to basic and acidic residues. The segment at 162–210 (YRAKGKSEAGKKGPGRPTGSKKKNEPEDEEEEEEEEEEEDDEEEEEDEE) is disordered. Residues 165–180 (KGKSEAGKKGPGRPTG) form a required for chemotactic activity region. Residues 187 to 210 (PEDEEEEEEEEEEEDDEEEEEDEE) are compositionally biased toward acidic residues.

Belongs to the HMGB family. In terms of assembly, interacts with POU2F2, POU2F1 and POU3F1. Component of the RAG complex composed of core components RAG1 and RAG2, and associated component HMGB1 or HMGB2. Component of the SET complex, composed of at least ANP32A, APEX1, HMGB2, NME1, SET and TREX1. Directly interacts with SET. Interacts with LEF1. Reduction/oxidation of cysteine residues Cys-23, Cys-45 and Cys-106 and a possible intramolecular disulfide bond involving Cys-23 and Cys-45 give rise to different redox forms with specific functional activities in various cellular compartments: 1- fully reduced HMGB2 (HMGB2C23hC45hC106h), 2- disulfide HMGB2 (HMGB2C23-C45C106h) and 3- sulfonyl HMGB2 (HMGB2C23soC45soC106so). In terms of tissue distribution, widely expressed in embryo. In adult mainly expressed in lymphoid organs and testes. Expressed in primary spermatocytes. Expressed in the superficial zone of articular cartilage.

The protein resides in the nucleus. The protein localises to the chromosome. Its subcellular location is the cytoplasm. It localises to the secreted. In terms of biological role, multifunctional protein with various roles in different cellular compartments. May act in a redox sensitive manner. In the nucleus is an abundant chromatin-associated non-histone protein involved in transcription, chromatin remodeling and V(D)J recombination and probably other processes. Binds DNA with a preference to non-canonical DNA structures such as single-stranded DNA. Can bent DNA and enhance DNA flexibility by looping thus providing a mechanism to promote activities on various gene promoters by enhancing transcription factor binding and/or bringing distant regulatory sequences into close proximity. Involved in V(D)J recombination by acting as a cofactor of the RAG complex: acts by stimulating cleavage and RAG protein binding at the 23 bp spacer of conserved recombination signal sequences (RSS). Proposed to be involved in the innate immune response to nucleic acids by acting as a cytoplasmic promiscuous immunogenic DNA/RNA sensor which cooperates with subsequent discriminative sensing by specific pattern recognition receptors. In the extracellular compartment acts as a chemokine. Promotes proliferation and migration of endothelial cells implicating AGER/RAGE. Has antimicrobial activity in gastrointestinal epithelial tissues. Involved in inflammatory response to antigenic stimulus coupled with pro-inflammatory activity. May play a role in germ cell differentiation. Involved in modulation of neurogenesis probably by regulation of neural stem proliferation. Involved in articular cartilage surface maintenance implicating LEF1 and the Wnt/beta-catenin pathway. This Mus musculus (Mouse) protein is High mobility group protein B2 (Hmgb2).